The primary structure comprises 505 residues: Serine/threonine protein kinase OSK1 (505 aa).

The Protein kinase domain occupies 14 to 266 (YRIGKTLGIG…IREIREHQWF (253 aa)). ATP is bound by residues 20-28 (LGIGSFGKV) and lysine 43. The active-site Proton acceptor is the aspartate 137. The UBA domain maps to 287–327 (KLDDETLNDVINMGFDKNQLIESLHKRLQNEATVAYYLLLD). The span at 347–361 (SSLAQVTPAETPNSA) shows a compositional bias: polar residues. The interval 347–372 (SSLAQVTPAETPNSATDHRQHGHMES) is disordered. The region spanning 456-504 (SEKSTHTVKFEIQLYKTRDEKYLLDLQRVSGPQLLFLDLCSAFLTQLRV) is the KA1 domain.

Belongs to the protein kinase superfamily. Ser/Thr protein kinase family. Expressed in young roots, young shoots, flowers, and immature seeds. Mostly expressed in leaf sheaths and roots, and to a lower extent, in germinating seeds, leaf blades and panicles.

It localises to the nucleus. It carries out the reaction L-seryl-[protein] + ATP = O-phospho-L-seryl-[protein] + ADP + H(+). The enzyme catalyses L-threonyl-[protein] + ATP = O-phospho-L-threonyl-[protein] + ADP + H(+). Serine/threonine-protein kinase involved in sugar signaling during germination and seedling growth. Negative regulators of sugar response complex (SRC) in alpha-amylase gene promoters, thus relieving SRC sugar repression in a MYBS1-dependent manner. Required for MYBS1 and AAMY3 accumulation under glucose starvation. The polypeptide is Serine/threonine protein kinase OSK1 (Oryza sativa subsp. japonica (Rice)).